The chain runs to 97 residues: Antitoxin YafN (97 aa).

It belongs to the phD/YefM antitoxin family. In terms of assembly, probably forms a complex with the mRNA interferase YafO which inhibits the mRNA interferase activity.

Functionally, antitoxin component of a type II toxin-antitoxin (TA) system. Functions as an mRNA interferase antitoxin; overexpression prevents YafO-mediated cessation of cell growth and inhibition of cell proliferation. The chain is Antitoxin YafN (yafN) from Escherichia coli (strain K12).